The primary structure comprises 321 residues: Acetylglutamate kinase (321 aa).

Substrate is bound by residues 88–89 (GG), R110, and N216.

Belongs to the acetylglutamate kinase family. ArgB subfamily.

It is found in the cytoplasm. The enzyme catalyses N-acetyl-L-glutamate + ATP = N-acetyl-L-glutamyl 5-phosphate + ADP. The protein operates within amino-acid biosynthesis; L-arginine biosynthesis; N(2)-acetyl-L-ornithine from L-glutamate: step 2/4. Catalyzes the ATP-dependent phosphorylation of N-acetyl-L-glutamate. The sequence is that of Acetylglutamate kinase from Ehrlichia chaffeensis (strain ATCC CRL-10679 / Arkansas).